The chain runs to 198 residues: Glycerol-3-phosphate acyltransferase (198 aa).

Transmembrane regions (helical) follow at residues 5–25 (LILL…LWIG), 56–76 (SIVT…PFFF), 84–104 (FWLL…FAGF), 114–134 (AGVI…VFLV), and 158–178 (LFMG…FVIW).

This sequence belongs to the PlsY family. As to quaternary structure, probably interacts with PlsX.

It localises to the cell membrane. The catalysed reaction is an acyl phosphate + sn-glycerol 3-phosphate = a 1-acyl-sn-glycero-3-phosphate + phosphate. It functions in the pathway lipid metabolism; phospholipid metabolism. In terms of biological role, catalyzes the transfer of an acyl group from acyl-phosphate (acyl-PO(4)) to glycerol-3-phosphate (G3P) to form lysophosphatidic acid (LPA). This enzyme utilizes acyl-phosphate as fatty acyl donor, but not acyl-CoA or acyl-ACP. In Listeria monocytogenes serovar 1/2a (strain ATCC BAA-679 / EGD-e), this protein is Glycerol-3-phosphate acyltransferase.